The following is a 149-amino-acid chain: Envelope glycoprotein UL4 (149 aa).

Residues 1-18 form the signal peptide; sequence MMLRTWISLPMVLLDAYC. 9 N-linked (GlcNAc...) asparagine; by host glycosylation sites follow: asparagine 46, asparagine 51, asparagine 59, asparagine 67, asparagine 105, asparagine 109, asparagine 119, asparagine 136, and asparagine 145.

Belongs to the RL11 family. In terms of processing, N-glycosylated and possibly O-glycosylated.

It localises to the virion membrane. This is Envelope glycoprotein UL4 (UL4) from Human cytomegalovirus (strain Merlin) (HHV-5).